The following is a 190-amino-acid chain: Protein A52 (190 aa).

It belongs to the orthopoxvirus A52R protein family. Interacts with host TRAF6 and IRAK2.

Bcl-2-like protein which targets host toll-like receptor signaling complexes to suppress innate immune response. Interacts with host TRAF6 to activate p38 and subsequently induce the expression of several cytokines such as IL-10. Also associates with host IRAK2 to inhibit NF-kappa-B signaling. The protein is Protein A52 of Vaccinia virus (strain Western Reserve) (VACV).